Here is a 535-residue protein sequence, read N- to C-terminus: Large neutral amino acids transporter small subunit 2 (535 aa).

Positions 1 to 10 (MEKGARHRHN) are enriched in basic residues. Positions 1–30 (MEKGARHRHNTDKNHAGGSESEDFPEASSG) are disordered. Residues 1 to 44 (MEKGARHRHNTDKNHAGGSESEDFPEASSGGGGVALKKEIGLVS) lie on the Cytoplasmic side of the membrane. Phosphoserine occurs at positions 19, 28, and 29. A helical membrane pass occupies residues 45-65 (ACGIIVGNIIGSGIFVSPKGV). Residue isoleucine 53 participates in L-leucine binding. Residues 66 to 73 (LENAGSVG) lie on the Extracellular side of the membrane. The helical transmembrane segment at 74-95 (LAVIVWIVTGLITAVGALCYAE) threads the bilayer. Topologically, residues 96–116 (LGVTIPKSGGDYSYVKDIFGG) are cytoplasmic. Residues 117–149 (LAGFLRLWIAVLVIYPTNQAVIALTFSNYVLQP) traverse the membrane as a helical segment. Residue asparagine 134 participates in L-tryptophan binding. Over 150–157 (LFPTCFPP) the chain is Extracellular. The helical transmembrane segment at 158 to 178 (DSGLRLLAAICLLLLTWVNCS) threads the bilayer. Residues 179–181 (SVR) are Cytoplasmic-facing. Residues 182–210 (WATRVQDIFTAGKLLALALIIIMGVVQIC) traverse the membrane as a helical segment. Over 211–230 (KGEYFWLEPKNAFDNFQEPD) the chain is Extracellular. The helical transmembrane segment at 231 to 252 (IGLIALAFLQGSFAYGGWNFLN) threads the bilayer. Glycine 246 contacts L-leucine. The Cytoplasmic segment spans residues 253–265 (YVTEELVDPYKNL). A helical transmembrane segment spans residues 266-287 (PRAIFISIPLVTFVYVFANVAY). At 288 to 312 (ITAMSPQELLASNAVAVTFGEKLLG) the chain is on the extracellular side. A helical membrane pass occupies residues 313-338 (VMAWIMPISVALSTFGGVNGSLFTSS). The Cytoplasmic segment spans residues 339–364 (RLFFAGAREGHLPSVLAMIHVKRCTP). The helical transmembrane segment at 365-382 (IPALLFTCLSTLLMLVTS) threads the bilayer. Residues 383–386 (DMYT) lie on the Extracellular side of the membrane. A helical membrane pass occupies residues 387 to 408 (LINYVGFINYLFYGVTVAGQIV). Asparagine 395 provides a ligand contact to L-tryptophan. The Cytoplasmic segment spans residues 409–423 (LRWKKPDIPRPIKIN). A run of 2 helical transmembrane segments spans residues 424–446 (LLFP…WSEP) and 447–466 (VVCG…YFLG). At 467–535 (VYWQHKPKCF…DKDSLEQSQP (69 aa)) the chain is on the cytoplasmic side. Residues 500-535 (GGSGTEGTREDMEEQQQPICQPSPGKDKDSLEQSQP) form a disordered region. A compositionally biased stretch (basic and acidic residues) spans 524 to 535 (GKDKDSLEQSQP). At serine 529 the chain carries Phosphoserine.

The protein belongs to the amino acid-polyamine-organocation (APC) superfamily. L-type amino acid transporter (LAT) (TC 2.A.3.8) family. As to quaternary structure, disulfide-linked heterodimer composed of the catalytic light chain subunit SLC7A8 and the heavy chain subunit SLC3A2. SLC3A2 acts as a chaperone for correct plasma membrane trafficking and stabilization of SLC7A8 and modulates the substrate affinity and specificity of SLC7A8. ICAM-1 associates with the heterodimer SLC3A2/SLC7A8; facilitates leucine uptake. In terms of tissue distribution, mainly expressed in kidney and small intestine.

It is found in the cell membrane. It localises to the basolateral cell membrane. It catalyses the reaction L-histidine(in) + L-phenylalanine(out) = L-histidine(out) + L-phenylalanine(in). It carries out the reaction L-tryptophan(in) + L-phenylalanine(out) = L-tryptophan(out) + L-phenylalanine(in). The catalysed reaction is L-isoleucine(in) + L-phenylalanine(out) = L-isoleucine(out) + L-phenylalanine(in). The enzyme catalyses L-valine(in) + L-phenylalanine(out) = L-valine(out) + L-phenylalanine(in). It catalyses the reaction L-leucine(in) + L-phenylalanine(out) = L-leucine(out) + L-phenylalanine(in). It carries out the reaction L-glutamine(in) + L-phenylalanine(out) = L-glutamine(out) + L-phenylalanine(in). The catalysed reaction is L-cysteine(in) + L-phenylalanine(out) = L-cysteine(out) + L-phenylalanine(in). The enzyme catalyses L-phenylalanine(out) + L-methionine(in) = L-phenylalanine(in) + L-methionine(out). It catalyses the reaction L-leucine(out) + L-methionine(in) = L-leucine(in) + L-methionine(out). It carries out the reaction L-cysteine(out) + L-methionine(in) = L-cysteine(in) + L-methionine(out). The catalysed reaction is S-methylmercury-L-cysteine(out) + L-methionine(in) = S-methylmercury-L-cysteine(in) + L-methionine(out). The enzyme catalyses S-methylmercury-L-cysteine(in) + L-leucine(out) = S-methylmercury-L-cysteine(out) + L-leucine(in). It catalyses the reaction S-methylmercury-L-cysteine(in) + L-phenylalanine(out) = S-methylmercury-L-cysteine(out) + L-phenylalanine(in). It carries out the reaction L-phenylalanine(out) + L-serine(in) = L-phenylalanine(in) + L-serine(out). The catalysed reaction is L-phenylalanine(out) + glycine(in) = L-phenylalanine(in) + glycine(out). The enzyme catalyses L-phenylalanine(out) + L-alanine(in) = L-phenylalanine(in) + L-alanine(out). It catalyses the reaction 3,3',5-triiodo-L-thyronine(out) = 3,3',5-triiodo-L-thyronine(in). It carries out the reaction 3,3'-diiodo-L-thyronine(out) = 3,3'-diiodo-L-thyronine(in). The catalysed reaction is L-dopa(out) + L-phenylalanine(in) = L-dopa(in) + L-phenylalanine(out). The transporter activity is inhibited by 2-aminobicyclo-(2,2,1)heptane-2-carboxylic acid (BCH) (a specific inhibitor of system L transport). Its function is as follows. Associates with SLC3A2 to form a functional heterodimeric complex that translocates small and large neutral amino acids with broad specificity and a stoichiometry of 1:1. Functions as amino acid antiporter mediating the influx of extracellular essential amino acids mainly in exchange with the efflux of highly concentrated intracellular amino acids. Has relatively symmetrical selectivities but strongly asymmetrical substrate affinities at both the intracellular and extracellular sides of the transporter. This asymmetry allows SLC7A8 to regulate intracellular amino acid pools (mM concentrations) by exchange with external amino acids (uM concentration range), equilibrating the relative concentrations of different amino acids across the plasma membrane instead of mediating their net uptake. May play an essential role in the reabsorption of neutral amino acids from the epithelial cells to the bloodstream in the kidney. Involved in the uptake of methylmercury (MeHg) when administered as the L-cysteine or D,L-homocysteine complexes, and hence plays a role in metal ion homeostasis and toxicity. Involved in the cellular activity of small molecular weight nitrosothiols, via the stereoselective transport of L-nitrosocysteine (L-CNSO) across the transmembrane. Imports the thyroid hormone diiodothyronine (T2) and to a smaller extent triiodothyronine (T3) but not rT 3 or thyroxine (T4). Mediates the uptake of L-DOPA. May participate in auditory function. The chain is Large neutral amino acids transporter small subunit 2 from Oryctolagus cuniculus (Rabbit).